Consider the following 367-residue polypeptide: Chorismate synthase (367 aa).

The disordered stretch occupies residues 41–60; the sequence is FTHDLQRRASGKSRHTSARR. Positions 48 and 54 each coordinate NADP(+). FMN is bound by residues 125–127, 238–239, G278, 293–297, and R319; these read RSS, NA, and KPTSS.

This sequence belongs to the chorismate synthase family. As to quaternary structure, homotetramer. FMNH2 serves as cofactor.

The enzyme catalyses 5-O-(1-carboxyvinyl)-3-phosphoshikimate = chorismate + phosphate. It participates in metabolic intermediate biosynthesis; chorismate biosynthesis; chorismate from D-erythrose 4-phosphate and phosphoenolpyruvate: step 7/7. Its function is as follows. Catalyzes the anti-1,4-elimination of the C-3 phosphate and the C-6 proR hydrogen from 5-enolpyruvylshikimate-3-phosphate (EPSP) to yield chorismate, which is the branch point compound that serves as the starting substrate for the three terminal pathways of aromatic amino acid biosynthesis. This reaction introduces a second double bond into the aromatic ring system. The protein is Chorismate synthase of Xanthomonas euvesicatoria pv. vesicatoria (strain 85-10) (Xanthomonas campestris pv. vesicatoria).